Here is a 251-residue protein sequence, read N- to C-terminus: PF03932 family protein CutC (251 aa).

This sequence belongs to the CutC family.

The protein resides in the cytoplasm. This is PF03932 family protein CutC from Bacteroides fragilis (strain ATCC 25285 / DSM 2151 / CCUG 4856 / JCM 11019 / LMG 10263 / NCTC 9343 / Onslow / VPI 2553 / EN-2).